The primary structure comprises 795 residues: TBC1 domain family member 5 (795 aa).

Residues 1-13 (MYHSLSETRHPLQ) show a composition bias toward basic and acidic residues. Positions 1 to 49 (MYHSLSETRHPLQPEEQEVGIDPLSSYSNKSGGDSNKNGRRTSSTLDSE) are disordered. Polar residues predominate over residues 25–49 (SSYSNKSGGDSNKNGRRTSSTLDSE). Phosphothreonine is present on Thr-42. A phosphoserine mark is found at Ser-43 and Ser-44. Positions 56 to 64 (RKEWEELFV) are required for interaction with retromer; involved in interaction with ATG8 family proteins. The LIR 1 signature appears at 57–62 (KEWEEL). The Rab-GAP TBC domain occupies 81–359 (LRSSRFRSIC…VVWDALFADG (279 aa)). At Ser-460 the chain carries Phosphoserine. A disordered region spans residues 475–564 (PGSAGGPVPG…PPSSATKKDS (90 aa)). Residues 484–496 (GGNSSSSSSVVIP) show a composition bias toward low complexity. Residues Ser-522, Ser-539, Ser-541, Ser-544, Ser-554, Ser-570, Ser-584, and Ser-730 each carry the phosphoserine modification. A compositionally biased stretch (polar residues) spans 523–542 (MPVQLNKGLSSKNISSSPSV). The segment covering 554–564 (SPPSSATKKDS) has biased composition (polar residues). The tract at residues 674–795 (HYCSSGQGQG…GFTIVSPLDI (122 aa)) is disordered. The segment covering 727-748 (ARGSFSGQAQPLRTLRSTSGKS) has biased composition (polar residues). Over residues 765–776 (PASASSSNPSSS) the composition is skewed to low complexity. The short motif at 785 to 789 (SGFTI) is the LIR 2 element. The segment at 786-791 (GFTIVS) is required for interaction with ATG8 family proteins. Ser-791 carries the phosphoserine modification.

In terms of assembly, interacts with MAP1LC3A, MAP1LC3B, MAP1LC3C, GABARAP, GABARAPL1, GABARAPL2. Interacts with VPS29 and VPS35; indicative for an association with retromer CSC subcomplex. MAP1LC3A and VPS29 compete for binding to TBC1D5. Interacts with AP2M1; indicative for an association with the AP2 complex. Interacts with ULK1 and ATG13 (phosphorylated); indicative for an association with the activated ULK1-ATG13-FIP200 complex. Interacts with ATG9A; the interactions seems to be restricted to the AP2-clathrin-associated fraction of ATG9A.

It is found in the endosome membrane. Its subcellular location is the cytoplasmic vesicle. It localises to the autophagosome. May act as a GTPase-activating protein (GAP) for Rab family protein(s). May act as a GAP for RAB7A. Can displace RAB7A and retromer CSC subcomplex from the endosomal membrane to the cytosol; at least retromer displacement seems to require its catalytic activity. Required for retrograde transport of cargo proteins from endosomes to the trans-Golgi network (TGN); the function seems to require its catalytic activity. Involved in regulation of autophagy. May act as a molecular switch between endosomal and autophagosomal transport and is involved in reprogramming vesicle trafficking upon autophagy induction. Involved in the trafficking of ATG9A upon activation of autophagy. May regulate the recruitment of ATG9A-AP2-containing vesicles to autophagic membranes. In Homo sapiens (Human), this protein is TBC1 domain family member 5 (TBC1D5).